The following is an 88-amino-acid chain: UPF0297 protein BPUM_2379 (88 aa).

Belongs to the UPF0297 family.

This Bacillus pumilus (strain SAFR-032) protein is UPF0297 protein BPUM_2379.